A 664-amino-acid polypeptide reads, in one-letter code: Macrolide export ATP-binding/permease protein MacB (664 aa).

Positions 8–246 (LEVHNLVREF…ELNKDPDAAP (239 aa)) constitute an ABC transporter domain. Residue 44–51 (GQSGSGKS) coordinates ATP. The next 4 membrane-spanning stretches (helical) occupy residues 287-307 (FLTMLGIIIGIASVVTVVALG), 543-563 (IAVISLIVGGIGVMNIMLVSV), 587-607 (FLIEAILVCLIGGVLGVLLSL), and 629-649 (SIVAAFVCSTLIGVVFGFLPA).

This sequence belongs to the ABC transporter superfamily. Macrolide exporter (TC 3.A.1.122) family. Homodimer. Part of the tripartite efflux system MacAB-TolC, which is composed of an inner membrane transporter, MacB, a periplasmic membrane fusion protein, MacA, and an outer membrane component, TolC. The complex forms a large protein conduit and can translocate molecules across both the inner and outer membranes. Interacts with MacA.

The protein localises to the cell inner membrane. Its function is as follows. Part of the tripartite efflux system MacAB-TolC. MacB is a non-canonical ABC transporter that contains transmembrane domains (TMD), which form a pore in the inner membrane, and an ATP-binding domain (NBD), which is responsible for energy generation. Confers resistance against macrolides. This chain is Macrolide export ATP-binding/permease protein MacB, found in Acinetobacter baylyi (strain ATCC 33305 / BD413 / ADP1).